The chain runs to 93 residues: UPF0147 protein PH1921.2 (93 aa).

It belongs to the UPF0147 family.

The polypeptide is UPF0147 protein PH1921.2 (Pyrococcus horikoshii (strain ATCC 700860 / DSM 12428 / JCM 9974 / NBRC 100139 / OT-3)).